A 392-amino-acid chain; its full sequence is Chorismate synthase (392 aa).

Positions 39 and 45 each coordinate NADP(+). Residues 131–133 (RSS), 255–256 (NA), G300, 315–319 (KPIPT), and R341 contribute to the FMN site.

It belongs to the chorismate synthase family. In terms of assembly, homotetramer. FMNH2 is required as a cofactor.

The catalysed reaction is 5-O-(1-carboxyvinyl)-3-phosphoshikimate = chorismate + phosphate. The protein operates within metabolic intermediate biosynthesis; chorismate biosynthesis; chorismate from D-erythrose 4-phosphate and phosphoenolpyruvate: step 7/7. In terms of biological role, catalyzes the anti-1,4-elimination of the C-3 phosphate and the C-6 proR hydrogen from 5-enolpyruvylshikimate-3-phosphate (EPSP) to yield chorismate, which is the branch point compound that serves as the starting substrate for the three terminal pathways of aromatic amino acid biosynthesis. This reaction introduces a second double bond into the aromatic ring system. The polypeptide is Chorismate synthase (Leuconostoc citreum (strain KM20)).